A 205-amino-acid chain; its full sequence is Small ribosomal subunit protein uS4 (205 aa).

The S4 RNA-binding domain maps to 93-171 (SRVSSVLYRS…SPHYLEVDRE (79 aa)).

The protein belongs to the universal ribosomal protein uS4 family. Part of the 30S ribosomal subunit. Contacts protein S5. The interaction surface between S4 and S5 is involved in control of translational fidelity.

Functionally, one of the primary rRNA binding proteins, it binds directly to 16S rRNA where it nucleates assembly of the body of the 30S subunit. Its function is as follows. With S5 and S12 plays an important role in translational accuracy. This Neorickettsia sennetsu (strain ATCC VR-367 / Miyayama) (Ehrlichia sennetsu) protein is Small ribosomal subunit protein uS4.